A 169-amino-acid chain; its full sequence is Large ribosomal subunit protein uL15 (169 aa).

The tract at residues 20 to 56 (GRGIGSGKGKTGGRGVKGQKARSGVSIKGFEGGQMPL) is disordered. Gly residues predominate over residues 21–35 (RGIGSGKGKTGGRGV).

The protein belongs to the universal ribosomal protein uL15 family. As to quaternary structure, part of the 50S ribosomal subunit.

Functionally, binds to the 23S rRNA. The protein is Large ribosomal subunit protein uL15 of Methylorubrum extorquens (strain CM4 / NCIMB 13688) (Methylobacterium extorquens).